An 89-amino-acid chain; its full sequence is Small ribosomal subunit protein uS15 (89 aa).

Belongs to the universal ribosomal protein uS15 family. Part of the 30S ribosomal subunit. Forms a bridge to the 50S subunit in the 70S ribosome, contacting the 23S rRNA.

One of the primary rRNA binding proteins, it binds directly to 16S rRNA where it helps nucleate assembly of the platform of the 30S subunit by binding and bridging several RNA helices of the 16S rRNA. Functionally, forms an intersubunit bridge (bridge B4) with the 23S rRNA of the 50S subunit in the ribosome. The sequence is that of Small ribosomal subunit protein uS15 from Leifsonia xyli subsp. xyli (strain CTCB07).